The sequence spans 71 residues: Large ribosomal subunit protein bL31 (71 aa).

Positions 16, 18, 38, and 41 each coordinate Zn(2+).

This sequence belongs to the bacterial ribosomal protein bL31 family. Type A subfamily. In terms of assembly, part of the 50S ribosomal subunit. It depends on Zn(2+) as a cofactor.

Binds the 23S rRNA. In Chromobacterium violaceum (strain ATCC 12472 / DSM 30191 / JCM 1249 / CCUG 213 / NBRC 12614 / NCIMB 9131 / NCTC 9757 / MK), this protein is Large ribosomal subunit protein bL31.